The chain runs to 562 residues: Dihydroxy-acid dehydratase (562 aa).

Cys55 is a [2Fe-2S] cluster binding site. Asp87 serves as a coordination point for Mg(2+). Cys128 is a [2Fe-2S] cluster binding site. Asp129 and Lys130 together coordinate Mg(2+). Position 130 is an N6-carboxylysine (Lys130). Cys200 is a [2Fe-2S] cluster binding site. Residue Glu451 coordinates Mg(2+). Ser477 functions as the Proton acceptor in the catalytic mechanism.

It belongs to the IlvD/Edd family. In terms of assembly, homodimer. [2Fe-2S] cluster serves as cofactor. It depends on Mg(2+) as a cofactor.

The catalysed reaction is (2R)-2,3-dihydroxy-3-methylbutanoate = 3-methyl-2-oxobutanoate + H2O. It carries out the reaction (2R,3R)-2,3-dihydroxy-3-methylpentanoate = (S)-3-methyl-2-oxopentanoate + H2O. Its pathway is amino-acid biosynthesis; L-isoleucine biosynthesis; L-isoleucine from 2-oxobutanoate: step 3/4. It participates in amino-acid biosynthesis; L-valine biosynthesis; L-valine from pyruvate: step 3/4. Functions in the biosynthesis of branched-chain amino acids. Catalyzes the dehydration of (2R,3R)-2,3-dihydroxy-3-methylpentanoate (2,3-dihydroxy-3-methylvalerate) into 2-oxo-3-methylpentanoate (2-oxo-3-methylvalerate) and of (2R)-2,3-dihydroxy-3-methylbutanoate (2,3-dihydroxyisovalerate) into 2-oxo-3-methylbutanoate (2-oxoisovalerate), the penultimate precursor to L-isoleucine and L-valine, respectively. In Cytophaga hutchinsonii (strain ATCC 33406 / DSM 1761 / CIP 103989 / NBRC 15051 / NCIMB 9469 / D465), this protein is Dihydroxy-acid dehydratase.